Here is a 942-residue protein sequence, read N- to C-terminus: Isoleucine--tRNA ligase (942 aa).

The short motif at 58–68 (PYANGDIHIGH) is the 'HIGH' region element. Glu-566 provides a ligand contact to L-isoleucyl-5'-AMP. A 'KMSKS' region motif is present at residues 607–611 (KMSKS). Residue Lys-610 coordinates ATP. Positions 905, 908, 925, and 928 each coordinate Zn(2+).

It belongs to the class-I aminoacyl-tRNA synthetase family. IleS type 1 subfamily. As to quaternary structure, monomer. Zn(2+) is required as a cofactor.

The protein localises to the cytoplasm. It carries out the reaction tRNA(Ile) + L-isoleucine + ATP = L-isoleucyl-tRNA(Ile) + AMP + diphosphate. Catalyzes the attachment of isoleucine to tRNA(Ile). As IleRS can inadvertently accommodate and process structurally similar amino acids such as valine, to avoid such errors it has two additional distinct tRNA(Ile)-dependent editing activities. One activity is designated as 'pretransfer' editing and involves the hydrolysis of activated Val-AMP. The other activity is designated 'posttransfer' editing and involves deacylation of mischarged Val-tRNA(Ile). The protein is Isoleucine--tRNA ligase of Pseudoalteromonas atlantica (strain T6c / ATCC BAA-1087).